Consider the following 68-residue polypeptide: Conotoxin Mi11.1 (68 aa).

A signal peptide spans 1–26 (MMLRLTSVSCFLLVIACLNLFQVVLT). 4 cysteine pairs are disulfide-bonded: C29-C43, C36-C48, C42-C52, and C47-C56. Residue Y60 is modified to Tyrosine amide. Residues 64-68 (ATFQE) constitute a propeptide that is removed on maturation.

It belongs to the conotoxin I2 superfamily. Expressed by the venom duct.

The protein resides in the secreted. This is Conotoxin Mi11.1 from Conus miles (Soldier cone).